A 282-amino-acid polypeptide reads, in one-letter code: MVVVQKIQEMKEIAKKLKKEGKSIGFVPTMGYLHEGHLSLVRLSKQQNDITIMSIFVNPIQFGPNEDYDRYPRDFERDKSLAEKEGVDYIFYPSVEEMYPEDFKTVVSVKKITEIMCGKSRPGHFDGVATVVLKLFNIVNPDRAYFGQKDAQQLAVIKQMVKDLNLDVEIVPCPIVREQDGLAMSSRNVYLSEEERKSATVLYRALNLAKEMIEKGQKDVSSIKRAMEEMILKEKYTKIDYIEFVNNDTFEIISKVEGKVLIALAVFVGKARLIDNIVVEAK.

30 to 37 (MGYLHEGH) provides a ligand contact to ATP. His-37 serves as the catalytic Proton donor. Residue Gln-61 coordinates (R)-pantoate. Gln-61 serves as a coordination point for beta-alanine. 147-150 (GQKD) is an ATP binding site. (R)-pantoate is bound at residue Gln-153. ATP contacts are provided by residues Val-176 and 184-187 (MSSR).

Belongs to the pantothenate synthetase family. As to quaternary structure, homodimer.

The protein resides in the cytoplasm. It carries out the reaction (R)-pantoate + beta-alanine + ATP = (R)-pantothenate + AMP + diphosphate + H(+). Its pathway is cofactor biosynthesis; (R)-pantothenate biosynthesis; (R)-pantothenate from (R)-pantoate and beta-alanine: step 1/1. Functionally, catalyzes the condensation of pantoate with beta-alanine in an ATP-dependent reaction via a pantoyl-adenylate intermediate. The protein is Pantothenate synthetase of Caldicellulosiruptor bescii (strain ATCC BAA-1888 / DSM 6725 / KCTC 15123 / Z-1320) (Anaerocellum thermophilum).